The following is a 142-amino-acid chain: Small ribosomal subunit protein bS6 (142 aa).

A disordered region spans residues 110–142 (NKKPSHAKEKHEKTEHAHSHHAEEAKSTESHSE).

It belongs to the bacterial ribosomal protein bS6 family.

Binds together with bS18 to 16S ribosomal RNA. The polypeptide is Small ribosomal subunit protein bS6 (Helicobacter pylori (strain G27)).